Consider the following 312-residue polypeptide: Isochorismatase (312 aa).

The Carrier domain occupies 229-302 (VFTCENIRKQ…EWQKLLTTRS (74 aa)). Position 263 is an O-(pantetheine 4'-phosphoryl)serine (S263).

It belongs to the isochorismatase family.

The catalysed reaction is isochorismate + H2O = (2S,3S)-2,3-dihydroxy-2,3-dihydrobenzoate + pyruvate. It functions in the pathway siderophore biosynthesis; bacillibactin biosynthesis. The sequence is that of Isochorismatase (dhbB) from Bacillus subtilis (strain 168).